The primary structure comprises 1149 residues: Polyprotein nsP1234 (1149 aa).

The region spanning 1 to 160 is the Macro domain; sequence APSYRVRRTD…KIQEAIDRRT (160 aa). Residues Asp10, Asn24, Gly32, Gly112, Val113, and Phe114 each coordinate ADP-D-ribose. Zn(2+)-binding residues include Cys262, Cys264, Cys287, and Cys305. At Thr344 the chain carries Phosphothreonine; by host. 2 consecutive short sequence motifs (FGDF; binding to host G3BP1) follow at residues 512–515 and 523–526; these read FGDF and FGDI. A RdRp catalytic domain is found at 903-1018; sequence DAVLETDIAS…HGVRSDPLMA (116 aa).

As to quaternary structure, interacts with mRNA-capping enzyme nsP1. Interacts with host DDX1. RNA-directed Interacts with host DDX3. Interacts (via C-terminus) with host G3BP1; this interaction inhibits the formation of host stress granules on viral mRNAs and the nsp3-G3BP1 complexes bind viral RNAs and probably orchestrate the assembly of viral replication complexes. Interacts (via C-terminus) with host G3BP2; this interaction inhibits the formation of host stress granules on viral mRNAs and the nsp3-G3BP2 complexes bind viral RNAs and probably orchestrate the assembly of viral replication complexes. In terms of assembly, interacts with itself. Interacts with mRNA-capping enzyme nsP1. Interacts with protease nsP2. Interacts with itself. Mg(2+) is required as a cofactor. The cofactor is Mn(2+). Post-translationally, polyprotein P1234: Specific enzymatic cleavages in vivo yield mature proteins. The processing of the polyprotein is temporally regulated. In early stages (1.7 hpi), P1234 is first cleaved in trans through its nsP2 protease activity, releasing P123' and nsP4, which associate to form the early replication complex. At the same time, P1234 is also cut at the nsP1/nsP2 site early in infection but with lower efficiency. After replication of the viral minus-strand RNAs (4 hpi), the polyproteins are cut at the nsP1/nsP2 and nsP2/nsP3 sites very efficiently, preventing accumulation of P123' and P1234 and allowing the formation of the late replication complex. NsP3'/nsP4 site is not cleaved anymore and P34 is produced rather than nsP4. In terms of processing, specific enzymatic cleavages in vivo yield mature proteins. The processing of the polyprotein is temporally regulated. In early stages (1.7 hpi), P123 is cleaved at the nsP1/nsP2 site with low efficiency. After replication of the viral minus-strand RNAs (4 hpi), the polyproteins are cut at the nsP1/nsP2 and nsP2/nsP3 sites very efficiently, preventing accumulation of P123 and allowing the formation of the late replication complex. Phosphorylated by host on serines and threonines. Post-translationally, ubiquitinated; targets the protein for rapid degradation via the ubiquitin system. Nsp4 is present in extremely low quantities due to low frequency of translation through the amber stop-codon and the degradation by the ubiquitin pathway.

The protein resides in the host cytoplasmic vesicle membrane. The catalysed reaction is RNA(n) + a ribonucleoside 5'-triphosphate = RNA(n+1) + diphosphate. It carries out the reaction 4-O-(ADP-D-ribosyl)-L-aspartyl-[protein] + H2O = L-aspartyl-[protein] + ADP-D-ribose + H(+). The enzyme catalyses 5-O-(ADP-D-ribosyl)-L-glutamyl-[protein] + H2O = L-glutamyl-[protein] + ADP-D-ribose + H(+). It catalyses the reaction RNA(n) + ATP = RNA(n)-3'-adenine ribonucleotide + diphosphate. The catalysed reaction is ADP-alpha-D-ribose 1''-phosphate + H2O = ADP-D-ribose + phosphate. Polyprotein P1234: Inactive precursor of the viral replicase, which is activated by cleavages carried out by the viral protease nsP2. Its function is as follows. The early replication complex formed by the polyprotein P123 and nsP4 synthesizes minus-strand RNAs. As soon P123 is cleaved into mature proteins, the plus-strand RNAs synthesis begins. Functionally, the early replication complex formed by the polyprotein P123' and nsP4 synthesizes minus-strand RNAs. Polyprotein P123' is a short-lived polyprotein that accumulates during early stage of infection. As soon P123' is cleaved into mature proteins, the plus-strand RNAs synthesis begins. In terms of biological role, seems to be essential for minus-strand RNAs and subgenomic 26S mRNAs synthesis. Displays mono-ADP-ribosylhydrolase activity. ADP-ribosylation is a post-translational modification that controls various processes of the host cell and the virus probably needs to revert it for optimal viral replication. Binds proteins of FXR family and sequesters them into the viral RNA replication complexes thereby inhibiting the formation of host stress granules on viral mRNAs. The nsp3'-FXR complexes bind viral RNAs and probably orchestrate the assembly of viral replication complexes, thanks to the ability of FXR family members to self-assemble and bind DNA. Seems to be essential for minus-strand RNAs and subgenomic 26S mRNAs synthesis. Displays mono-ADP-ribosylhydrolase activity. ADP-ribosylation is a post-translational modification that controls various processes of the host cell and the virus probably needs to revert it for optimal viral replication. Binds proteins of G3BP family and sequesters them into the viral RNA replication complexes thereby inhibiting the formation of host stress granules on viral mRNAs. The nsp3-G3BP complexes bind viral RNAs and probably orchestrate the assembly of viral replication complexes, thanks to the ability of G3BP family members to self-assemble and bind DNA. Its function is as follows. RNA dependent RNA polymerase. Replicates genomic and antigenomic RNA by recognizing replications specific signals. The early replication complex formed by the polyprotein P123 and nsP4 synthesizes minus-strand RNAs. The late replication complex composed of fully processed nsP1-nsP4 is responsible for the production of genomic and subgenomic plus-strand RNAs. This Ross river virus (strain T48) (RRV) protein is Polyprotein nsP1234.